A 445-amino-acid polypeptide reads, in one-letter code: Transcription activator AFTR-1 (445 aa).

The segment at residues 17-44 is a DNA-binding region (zn(2)-C6 fungal-type); that stretch reads CDFCTQSKLRCNKNKPSCRRCTLQQQPC. Residues 50-89 are disordered; that stretch reads RRTGRPPKHPRKANDCQEANGQHGDQDPVTSTPGGSYQQQ. Residues 51 to 60 show a composition bias toward basic residues; it reads RTGRPPKHPR. A compositionally biased stretch (polar residues) spans 77–89; that stretch reads PVTSTPGGSYQQQ.

The protein resides in the nucleus. In terms of biological role, transcription factor that regulates the expression of the gene clusters that mediate the biosynthesis of the host-selective toxins (HSTs) AF-toxins responsible for Alternaria black spot of strawberry disease by the strawberry pathotype. On cellular level, AF-toxins affect plasma membrane of susceptible cells and cause a sudden increase in loss of K(+) after a few minutes of toxin treatment. This chain is Transcription activator AFTR-1, found in Alternaria alternata (Alternaria rot fungus).